The sequence spans 374 residues: Coiled-coil domain-containing protein 89 (374 aa).

Residues 1–38 (MRAPMPQKEQAPRMDTSPPEERLEKQNEKLNNQEEEME) are disordered. Residue T16 is modified to Phosphothreonine. A compositionally biased stretch (basic and acidic residues) spans 19-32 (PEERLEKQNEKLNN). Residues 19 to 350 (PEERLEKQNE…YDELRLQSEA (332 aa)) are a coiled coil.

It belongs to the CCDC89 family. Interacts with HEY1.

It is found in the cytoplasm. Its subcellular location is the nucleus. The polypeptide is Coiled-coil domain-containing protein 89 (CCDC89) (Macaca fascicularis (Crab-eating macaque)).